Here is a 683-residue protein sequence, read N- to C-terminus: Elongation factor G 1 (683 aa).

The 276-residue stretch at aspartate 3–asparagine 278 folds into the tr-type G domain. Residues alanine 12–threonine 19, aspartate 76–histidine 80, and asparagine 130–aspartate 133 each bind GTP.

It belongs to the TRAFAC class translation factor GTPase superfamily. Classic translation factor GTPase family. EF-G/EF-2 subfamily.

The protein localises to the cytoplasm. Functionally, catalyzes the GTP-dependent ribosomal translocation step during translation elongation. During this step, the ribosome changes from the pre-translocational (PRE) to the post-translocational (POST) state as the newly formed A-site-bound peptidyl-tRNA and P-site-bound deacylated tRNA move to the P and E sites, respectively. Catalyzes the coordinated movement of the two tRNA molecules, the mRNA and conformational changes in the ribosome. The polypeptide is Elongation factor G 1 (Treponema denticola (strain ATCC 35405 / DSM 14222 / CIP 103919 / JCM 8153 / KCTC 15104)).